A 327-amino-acid chain; its full sequence is MPFEIPFLVPILIVILLLVFFSLVPVGLWVTAQFSGVHVKISQLIGMRLRRVIPKNIINPLIKATKAGLNLTTNQLEAHYLAGGNVNTLVNALIAAQRADIELEFERAAAIDLAGRNVLEAVQVSVNPKVIETPNIAAVAMNGIEVIVKAKVTVRANIERLIGGAGEETIIARVGEGIVTTVGSSESHTSVLENPDSISKTVLNKGLDSGTAFEILSIDIADVDVGRNIGAKLQTDQAEADKRIAQAKAEERRAMAVAKEQEMIAEVRSMRAKVVESESKVPLAIAKALESGNLGVLDYYNMKNIISDTEMRQAISGNSEKIKEDDK.

The helical transmembrane segment at 7–27 (FLVPILIVILLLVFFSLVPVG) threads the bilayer.

This sequence belongs to the flotillin-like FloA family. As to quaternary structure, homooligomerizes.

The protein resides in the cell membrane. Its subcellular location is the membrane raft. Found in functional membrane microdomains (FMM) that may be equivalent to eukaryotic membrane rafts. FMMs are highly dynamic and increase in number as cells age. Flotillins are thought to be important factors in membrane fluidity. This Finegoldia magna (strain ATCC 29328 / DSM 20472 / WAL 2508) (Peptostreptococcus magnus) protein is Flotillin-like protein FloA.